A 252-amino-acid polypeptide reads, in one-letter code: Indole-3-glycerol phosphate synthase (252 aa).

This sequence belongs to the TrpC family.

It carries out the reaction 1-(2-carboxyphenylamino)-1-deoxy-D-ribulose 5-phosphate + H(+) = (1S,2R)-1-C-(indol-3-yl)glycerol 3-phosphate + CO2 + H2O. Its pathway is amino-acid biosynthesis; L-tryptophan biosynthesis; L-tryptophan from chorismate: step 4/5. The polypeptide is Indole-3-glycerol phosphate synthase (Listeria monocytogenes serotype 4a (strain HCC23)).